The primary structure comprises 96 residues: uncharacterized protein (96 aa).

The first 21 residues, 1 to 21 (MLASVLILGAIAVGSAIPTIA), serve as a signal peptide directing secretion.

This is an uncharacterized protein from Archaeoglobus fulgidus (strain ATCC 49558 / DSM 4304 / JCM 9628 / NBRC 100126 / VC-16).